The primary structure comprises 247 residues: Proteasome subunit alpha type-7 (247 aa).

The protein belongs to the peptidase T1A family. In terms of assembly, the 26S proteasome consists of a 20S proteasome core and two 19S regulatory subunits. The 20S proteasome core is composed of 28 subunits that are arranged in four stacked rings, resulting in a barrel-shaped structure. The two end rings are each formed by seven alpha subunits, and the two central rings are each formed by seven beta subunits. The catalytic chamber with the active sites is on the inside of the barrel.

It is found in the cytoplasm. The protein localises to the nucleus. In terms of biological role, the proteasome is a multicatalytic proteinase complex which is characterized by its ability to cleave peptides with Arg, Phe, Tyr, Leu, and Glu adjacent to the leaving group at neutral or slightly basic pH. The proteasome has an ATP-dependent proteolytic activity. The protein is Proteasome subunit alpha type-7 (PSA4) of Trypanosoma brucei brucei.